The chain runs to 342 residues: Glucokinase (342 aa).

7-12 (GDIGGT) is a binding site for ATP.

This sequence belongs to the bacterial glucokinase family.

The protein localises to the cytoplasm. It carries out the reaction D-glucose + ATP = D-glucose 6-phosphate + ADP + H(+). The protein is Glucokinase of Trichormus variabilis (strain ATCC 29413 / PCC 7937) (Anabaena variabilis).